The following is a 416-amino-acid chain: Gamma-glutamyl phosphate reductase (416 aa).

This sequence belongs to the gamma-glutamyl phosphate reductase family.

It is found in the cytoplasm. The catalysed reaction is L-glutamate 5-semialdehyde + phosphate + NADP(+) = L-glutamyl 5-phosphate + NADPH + H(+). It functions in the pathway amino-acid biosynthesis; L-proline biosynthesis; L-glutamate 5-semialdehyde from L-glutamate: step 2/2. Functionally, catalyzes the NADPH-dependent reduction of L-glutamate 5-phosphate into L-glutamate 5-semialdehyde and phosphate. The product spontaneously undergoes cyclization to form 1-pyrroline-5-carboxylate. In Streptococcus pyogenes serotype M1, this protein is Gamma-glutamyl phosphate reductase.